The chain runs to 332 residues: 2,3-diketo-L-gulonate reductase (332 aa).

Catalysis depends on H44, which acts as the Proton donor. Residues 168-174, 224-225, and 304-306 contribute to the NAD(+) site; these read ITMVDMS, WK, and GHE.

The protein belongs to the LDH2/MDH2 oxidoreductase family. DlgD subfamily. In terms of assembly, homodimer.

It is found in the cytoplasm. The catalysed reaction is 3-dehydro-L-gulonate + NAD(+) = 2,3-dioxo-L-gulonate + NADH + H(+). The enzyme catalyses 3-dehydro-L-gulonate + NADP(+) = 2,3-dioxo-L-gulonate + NADPH + H(+). Its function is as follows. Catalyzes the reduction of 2,3-diketo-L-gulonate in the presence of NADH, to form 3-keto-L-gulonate. The chain is 2,3-diketo-L-gulonate reductase from Escherichia coli O81 (strain ED1a).